The chain runs to 351 residues: Holliday junction branch migration complex subunit RuvB (351 aa).

Residues 4–199 form a large ATPase domain (RuvB-L) region; sequence DNPQFNQWYE…FGIINSLQYY (196 aa). ATP-binding positions include L38, R39, G80, K83, T84, T85, 146–148, R189, Y199, and R236; that span reads EDY. T84 contributes to the Mg(2+) binding site. A small ATPAse domain (RuvB-S) region spans residues 200–270; it reads TPEELQQIVV…IVTIGLDKLR (71 aa). Residues 273–351 are head domain (RuvB-H); it reads NRGLDETDHK…HLGHAYQRKL (79 aa). DNA is bound by residues R328 and R333.

The protein belongs to the RuvB family. As to quaternary structure, homohexamer. Forms an RuvA(8)-RuvB(12)-Holliday junction (HJ) complex. HJ DNA is sandwiched between 2 RuvA tetramers; dsDNA enters through RuvA and exits via RuvB. An RuvB hexamer assembles on each DNA strand where it exits the tetramer. Each RuvB hexamer is contacted by two RuvA subunits (via domain III) on 2 adjacent RuvB subunits; this complex drives branch migration. In the full resolvosome a probable DNA-RuvA(4)-RuvB(12)-RuvC(2) complex forms which resolves the HJ.

It localises to the cytoplasm. The enzyme catalyses ATP + H2O = ADP + phosphate + H(+). Functionally, the RuvA-RuvB-RuvC complex processes Holliday junction (HJ) DNA during genetic recombination and DNA repair, while the RuvA-RuvB complex plays an important role in the rescue of blocked DNA replication forks via replication fork reversal (RFR). RuvA specifically binds to HJ cruciform DNA, conferring on it an open structure. The RuvB hexamer acts as an ATP-dependent pump, pulling dsDNA into and through the RuvAB complex. RuvB forms 2 homohexamers on either side of HJ DNA bound by 1 or 2 RuvA tetramers; 4 subunits per hexamer contact DNA at a time. Coordinated motions by a converter formed by DNA-disengaged RuvB subunits stimulates ATP hydrolysis and nucleotide exchange. Immobilization of the converter enables RuvB to convert the ATP-contained energy into a lever motion, pulling 2 nucleotides of DNA out of the RuvA tetramer per ATP hydrolyzed, thus driving DNA branch migration. The RuvB motors rotate together with the DNA substrate, which together with the progressing nucleotide cycle form the mechanistic basis for DNA recombination by continuous HJ branch migration. Branch migration allows RuvC to scan DNA until it finds its consensus sequence, where it cleaves and resolves cruciform DNA. This is Holliday junction branch migration complex subunit RuvB from Leuconostoc mesenteroides subsp. mesenteroides (strain ATCC 8293 / DSM 20343 / BCRC 11652 / CCM 1803 / JCM 6124 / NCDO 523 / NBRC 100496 / NCIMB 8023 / NCTC 12954 / NRRL B-1118 / 37Y).